Reading from the N-terminus, the 100-residue chain is Small ribosomal subunit protein uS14 (100 aa).

It belongs to the universal ribosomal protein uS14 family. In terms of assembly, part of the 30S ribosomal subunit. Contacts proteins S3 and S10.

Functionally, binds 16S rRNA, required for the assembly of 30S particles and may also be responsible for determining the conformation of the 16S rRNA at the A site. The polypeptide is Small ribosomal subunit protein uS14 (Prochlorococcus marinus (strain NATL1A)).